The chain runs to 115 residues: Large ribosomal subunit protein bL19 (115 aa).

The protein belongs to the bacterial ribosomal protein bL19 family.

This protein is located at the 30S-50S ribosomal subunit interface and may play a role in the structure and function of the aminoacyl-tRNA binding site. The protein is Large ribosomal subunit protein bL19 of Desulforudis audaxviator (strain MP104C).